A 360-amino-acid chain; its full sequence is Phospho-N-acetylmuramoyl-pentapeptide-transferase (360 aa).

10 helical membrane passes run 21–41, 73–93, 94–114, 132–152, 168–188, 199–219, 236–256, 263–283, 288–308, and 338–358; these read YLSF…LWMG, TMGG…WANL, SNPY…VGFV, WKYF…YAYG, VMPQ…VGTS, GLAI…AWAT, ASEL…FLWF, VFMG…IAVL, LVLV…ILQV, and VIVR…ATLK.

This sequence belongs to the glycosyltransferase 4 family. MraY subfamily. The cofactor is Mg(2+).

It is found in the cell inner membrane. It catalyses the reaction UDP-N-acetyl-alpha-D-muramoyl-L-alanyl-gamma-D-glutamyl-meso-2,6-diaminopimeloyl-D-alanyl-D-alanine + di-trans,octa-cis-undecaprenyl phosphate = di-trans,octa-cis-undecaprenyl diphospho-N-acetyl-alpha-D-muramoyl-L-alanyl-D-glutamyl-meso-2,6-diaminopimeloyl-D-alanyl-D-alanine + UMP. The protein operates within cell wall biogenesis; peptidoglycan biosynthesis. Its function is as follows. Catalyzes the initial step of the lipid cycle reactions in the biosynthesis of the cell wall peptidoglycan: transfers peptidoglycan precursor phospho-MurNAc-pentapeptide from UDP-MurNAc-pentapeptide onto the lipid carrier undecaprenyl phosphate, yielding undecaprenyl-pyrophosphoryl-MurNAc-pentapeptide, known as lipid I. This Vibrio vulnificus (strain CMCP6) protein is Phospho-N-acetylmuramoyl-pentapeptide-transferase.